Here is a 137-residue protein sequence, read N- to C-terminus: uncharacterized protein (137 aa).

The next 2 helical transmembrane spans lie at 26-42 (CSLC…FFAM) and 52-69 (ASIP…GSIL).

It localises to the membrane. This is an uncharacterized protein from Saccharomyces cerevisiae (strain ATCC 204508 / S288c) (Baker's yeast).